A 454-amino-acid polypeptide reads, in one-letter code: Elongation factor Tu, mitochondrial (454 aa).

The N-terminal 51 residues, 1–51, are a transit peptide targeting the mitochondrion; the sequence is MASVVLRNPSSKRLVPFSSQIYSRCGASVTSSYSISHSIGGDDLSSSTFGT. A tr-type G domain is found at 65–261; it reads KPHVNVGTIG…AVDEYIPDPV (197 aa). The segment at 74 to 81 is G1; the sequence is GHVDHGKT. 74–81 provides a ligand contact to GTP; the sequence is GHVDHGKT. Thr82 carries the phosphothreonine modification. The G2 stretch occupies residues 115-119; sequence GITIA. Residues 136-139 are G3; the sequence is DCPG. Residues 136 to 140 and 191 to 194 contribute to the GTP site; these read DCPGH and NKVD. Residues 191-194 are G4; that stretch reads NKVD. A G5 region spans residues 229–231; sequence SAL.

This sequence belongs to the TRAFAC class translation factor GTPase superfamily. Classic translation factor GTPase family. EF-Tu/EF-1A subfamily.

The protein resides in the mitochondrion. In terms of biological role, this protein promotes the GTP-dependent binding of aminoacyl-tRNA to the A-site of ribosomes during protein biosynthesis. The polypeptide is Elongation factor Tu, mitochondrial (TUFA) (Arabidopsis thaliana (Mouse-ear cress)).